A 681-amino-acid chain; its full sequence is Ribosomal L1 domain-containing protein CG13096 (681 aa).

Disordered stretches follow at residues 1 to 248 (MVKV…AKSK) and 579 to 681 (DAAP…DDEE). Phosphoserine occurs at positions 15 and 17. A compositionally biased stretch (basic and acidic residues) spans 54–74 (VKKDAIKKEPEVSKKGAEKKQ). Phosphoserine is present on Ser-89. Positions 103–112 (KPAASGAPVG) are enriched in low complexity. Ser-128 bears the Phosphoserine mark. The span at 189 to 217 (QAAPAKPAKAQPASQLQKKAKAVQKLSKP) shows a compositional bias: low complexity. Positions 599–610 (KESSSEGAKADA) are enriched in basic and acidic residues. Acidic residues predominate over residues 611–681 (ESDEEEEVEE…EDDDDDDDEE (71 aa)).

The protein belongs to the universal ribosomal protein uL1 family. Highly divergent.

The sequence is that of Ribosomal L1 domain-containing protein CG13096 from Drosophila melanogaster (Fruit fly).